Here is a 1050-residue protein sequence, read N- to C-terminus: MHQPPESTAAAAAAADISARKMAHPAMFPRRGSGGGSASALSAAGTGVSGAAPSSEDFPPPSSLLQPPPPAASSTQGPQPPPPQSLNLLSQAQLQGQPLAPGGTQMKKKSGFQITSVTPAQISASISSNNSIAEDTESYDDLDESHTEDLSSSEILDVSLSRATDLGEPERSSSEETLNNFQEAETPGAVSPNQPHLPQPHLPHLPQQNVVINGNAHPHHLHHHHHIHHGHHLHHGHHHSSHAAVASTSVPGGPPPTSPVSRKLSTAGSSDGGVPVPPTSAVSSAGLPASVMTSIRAPSTPGSIGVNSVTGTNATNNVNIAAVGGFSPGVANSVHPNAVSISGGPGVTSGVNVNVLSGMGNGTISSPVLNAAAGITVGVVSSQQQQPQQPPPTVNTSRFRVVKLDSTSEPFKKGRWTCTEFYERENAVPGPEGVAINKVVETVKQTPTEASSSERESTSGSSVSSSVSTLSHYTESVGSGEMGAPTVVVQQQQPLPPAPPGLQGVALQQLDFSSPGPQSISQSQMSQVQLQPQELSFQQKPNLQPVPLQATMSAATGIQPSPVNVVGVTSAVGQQPSISSLAQPQLPYPQPAPPVQTPLPGAPPQQLQYGQQQPMVPTQIAPGHGQPATQNPPSEYAQQQPIFQAAMSSGQSSSTGTGASVIPVAQPQGIQLPVQPTAVQAQPAGATGQPIGQAPTAVSTVPAGGQIASIGQQANIPTAVQPPSTQVTPSVVQQGAPPSSQVVLPAPTGIIHQGVQTSAPSLPQQLVIAPQSTMVAVPPQTQGVEAVAHGVVSHQLPTGSPLPSASTISVTSQVSSAGPSGMSSVPTNLVPPQNIAQPPATQNGSLVQSVSQSPLIATNINLPLAQQIPLSSTQFSTQSLAQAIGSQMEDTRRPAEPSSGGLPQTLSGDSGGVSAVSDGSSSSLAASASLFPLKVLPLTTPLVDGEDESSGASVVAIDNKIEQAMDLVKSHLMYAVREEVEVLKEQIKELIEKNSQLEQENNLLKTLASPEQLAQFQAQLQTGSPPATTQPQGTTQPPAQPASQGSGSTA.

The required for interaction with TGFBR1 and promotion of TGF-beta signaling stretch occupies residues 1 to 99; it reads MHQPPESTAA…SQAQLQGQPL (99 aa). 8 disordered regions span residues 22–111, 126–285, 445–479, 511–531, 581–609, 720–740, 795–847, and 879–919; these read MAHP…KKSG, ISSN…VSSA, QTPT…SVGS, DFSS…VQLQ, LAQP…QLQY, VQPP…PPSS, QLPT…GSLV, and SLAQ…VSDG. Low complexity predominate over residues 38–55; it reads ASALSAAGTGVSGAAPSS. Positions 58-71 are enriched in pro residues; sequence FPPPSSLLQPPPPA. The segment covering 85–97 has biased composition (low complexity); that stretch reads SLNLLSQAQLQGQ. Residues 134–143 are compositionally biased toward acidic residues; sequence EDTESYDDLD. Residues 217 to 241 show a composition bias toward basic residues; the sequence is HPHHLHHHHHIHHGHHLHHGHHHSS. Ser-265 carries the phosphoserine modification. Positions 458–476 are enriched in low complexity; it reads TSGSSVSSSVSTLSHYTES. Residues 586–603 are compositionally biased toward pro residues; it reads LPYPQPAPPVQTPLPGAP. Residues 906-919 show a composition bias toward low complexity; the sequence is LSGDSGGVSAVSDG. A leucine-zipper region spans residues 983-1004; it reads LKEQIKELIEKNSQLEQENNLL. A disordered region spans residues 1015–1050; that stretch reads QFQAQLQTGSPPATTQPQGTTQPPAQPASQGSGSTA. Positions 1021 to 1050 are enriched in low complexity; it reads QTGSPPATTQPQGTTQPPAQPASQGSGSTA.

This sequence belongs to the TSC-22/Dip/Bun family. Forms homodimers. Forms heterodimers. Component of a complex composed of TSC22D1 (via N-terminus), TGFBR1 and TGFBR2; the interaction between TSC22D1 and TGFBR1 is inhibited by SMAD7 and promoted by TGFB1. Interacts with SMAD7; the interaction requires TGF-beta and the interaction is inhibited by TGFBR1. Interacts with TPT1/fortilin; interaction results in the destabilization of TSC22D1 protein and prevents TSC22D1-mediated apoptosis. Interacts with SMAD4 (via N-terminus). Interacts with ACVRL1/ALK1, ACVR1/ALK2, BMPR1A/ALK3, ACVR1B/ALK4, BMPR1B/ALK6, ACVR2A/ACTRII, and BMPR2. Interacts with SMAD6. Interacts with TFE3; the interaction is enhanced in the presence of TGF-beta. As to quaternary structure, forms a heterodimer with TSC22D4/THG1. In terms of assembly, forms a heterodimer with TSC22D4/THG1. Interacts with histone H1-2. Interacts with GNL3. Ubiquitously expressed, abundantly expressed in testis, ovary, uterus, and lung. Expressed in cardiomyocytes.

Its subcellular location is the cytoplasm. It is found in the nucleus. The protein resides in the cell membrane. It localises to the mitochondrion. Its function is as follows. Transcriptional repressor. Acts on the C-type natriuretic peptide (CNP) promoter. Acts to promote CASP3-mediated apoptosis. Positively regulates TGF-beta signaling by interacting with SMAD7 which inhibits binding of SMAD7 to TGFBR1, preventing recruitment of SMURF ubiquitin ligases to TGFBR1 and inhibiting SMURF-mediated ubiquitination and degradation of TGFBR1. Contributes to enhancement of TGF-beta signaling by binding to and modulating the transcription activator activity of SMAD4. Promotes TGF-beta-induced transcription of COL1A2; via its interaction with TFE3 at E-boxes in the gene proximal promoter. Plays a role in the repression of hematopoietic precursor cell growth. Promotes IL2 deprivation-induced apoptosis in T-lymphocytes, via repression of TSC22D3/GILZ transcription and activation of the caspase cascade. Functionally, may act to negatively regulate TGFB3 signaling and thereby inhibit cell death in mammary gland cells. Positively regulates cell death in response to TGFB3 during mammary gland involution. The chain is TSC22 domain family protein 1 from Rattus norvegicus (Rat).